A 641-amino-acid chain; its full sequence is Forkhead box protein P4 (641 aa).

Disordered stretches follow at residues 1–43 and 239–264; these read MMVE…NGEL and SFPT…RRES. Composition is skewed to polar residues over residues 8–27 and 239–259; these read IRST…QSDS and SFPT…NGQN. The C2H2-type zinc finger occupies 278 to 303; that stretch reads GECRWPGCEALCEDMGQFIKHLNTEH. A leucine-zipper region spans residues 320–341; that stretch reads VQQLEIQLAKESERLQAMMTHL. The segment at 354–358 is ctbp1-binding; it reads PLNLV. The fork-head DNA-binding region spans 436–526; that stretch reads RPPFTYASLI…PPKMTGSPTL (91 aa). A disordered region spans residues 563–641; sequence SSGSVLHGGH…ESESPMEDLP (79 aa). Over residues 576 to 599 the composition is skewed to polar residues; it reads TSTGEPGNSNGSSPRLSPQYSQSI. The span at 600–611 shows a compositional bias: basic and acidic residues; it reads HVKEEPAEDDVR. The segment covering 629–641 has biased composition (acidic residues); it reads RDLESESPMEDLP.

Dimerization is required for DNA-binding. In terms of tissue distribution, first expressed in the anterior neural field of stage 15 embryos. At stage 18, localized in three domains of the brain (rostral forebrain, midbrain and hindbrain) and in the eye anlage. Cerebral and retinal expression persists at later stages with additional expression in the branchial arches, at the base of the hatching gland, and in the pancreas.

The protein localises to the nucleus. Its function is as follows. Transcriptional repressor. This chain is Forkhead box protein P4, found in Xenopus laevis (African clawed frog).